Consider the following 446-residue polypeptide: Probable tRNA modification GTPase MnmE (446 aa).

(6S)-5-formyl-5,6,7,8-tetrahydrofolate is bound by residues Arg28, Glu87, and Arg126. Residues 218–373 form the TrmE-type G domain; it reads GIQVALLGPA…LKQLIWQQAT (156 aa). Asn228 provides a ligand contact to K(+). GTP is bound by residues 228-233, 247-253, and 272-275; these read NAGKST, TPIAGTT, and DTAG. Ser232 is a Mg(2+) binding site. K(+) is bound by residues Thr247, Ile249, and Thr252. Thr253 is a Mg(2+) binding site. Lys446 lines the (6S)-5-formyl-5,6,7,8-tetrahydrofolate pocket.

This sequence belongs to the TRAFAC class TrmE-Era-EngA-EngB-Septin-like GTPase superfamily. TrmE GTPase family. It depends on K(+) as a cofactor.

It localises to the plastid. The protein localises to the chloroplast. Functionally, exhibits a very high intrinsic GTPase hydrolysis rate. Involved in the addition of a carboxymethylaminomethyl (cmnm) group at the wobble position (U34) of certain tRNAs, forming tRNA-cmnm(5)s(2)U34. The protein is Probable tRNA modification GTPase MnmE of Cyanidioschyzon merolae (strain NIES-3377 / 10D) (Unicellular red alga).